The primary structure comprises 406 residues: Bifunctional enzyme IspD/IspF (406 aa).

The tract at residues Met1–Val246 is 2-C-methyl-D-erythritol 4-phosphate cytidylyltransferase. The 2-C-methyl-D-erythritol 2,4-cyclodiphosphate synthase stretch occupies residues Arg247–Arg406. A divalent metal cation contacts are provided by Asp253 and His255. 4-CDP-2-C-methyl-D-erythritol 2-phosphate contacts are provided by residues Asp253 to His255 and His279 to Ser280. His287 is a binding site for a divalent metal cation. 4-CDP-2-C-methyl-D-erythritol 2-phosphate is bound by residues Asp301–Gly303, Thr377–Glu380, Phe384, and Arg387.

In the N-terminal section; belongs to the IspD/TarI cytidylyltransferase family. IspD subfamily. It in the C-terminal section; belongs to the IspF family. It depends on a divalent metal cation as a cofactor.

The catalysed reaction is 2-C-methyl-D-erythritol 4-phosphate + CTP + H(+) = 4-CDP-2-C-methyl-D-erythritol + diphosphate. It catalyses the reaction 4-CDP-2-C-methyl-D-erythritol 2-phosphate = 2-C-methyl-D-erythritol 2,4-cyclic diphosphate + CMP. The protein operates within isoprenoid biosynthesis; isopentenyl diphosphate biosynthesis via DXP pathway; isopentenyl diphosphate from 1-deoxy-D-xylulose 5-phosphate: step 2/6. It functions in the pathway isoprenoid biosynthesis; isopentenyl diphosphate biosynthesis via DXP pathway; isopentenyl diphosphate from 1-deoxy-D-xylulose 5-phosphate: step 4/6. Bifunctional enzyme that catalyzes the formation of 4-diphosphocytidyl-2-C-methyl-D-erythritol from CTP and 2-C-methyl-D-erythritol 4-phosphate (MEP) (IspD), and catalyzes the conversion of 4-diphosphocytidyl-2-C-methyl-D-erythritol 2-phosphate (CDP-ME2P) to 2-C-methyl-D-erythritol 2,4-cyclodiphosphate (ME-CPP) with a corresponding release of cytidine 5-monophosphate (CMP) (IspF). The protein is Bifunctional enzyme IspD/IspF of Rhizobium leguminosarum bv. trifolii (strain WSM2304).